A 486-amino-acid polypeptide reads, in one-letter code: Glutamyl-tRNA(Gln) amidotransferase subunit A (486 aa).

Residues Lys79 and Ser154 each act as charge relay system in the active site. The active-site Acyl-ester intermediate is Ser178.

This sequence belongs to the amidase family. GatA subfamily. Heterotrimer of A, B and C subunits.

The catalysed reaction is L-glutamyl-tRNA(Gln) + L-glutamine + ATP + H2O = L-glutaminyl-tRNA(Gln) + L-glutamate + ADP + phosphate + H(+). Functionally, allows the formation of correctly charged Gln-tRNA(Gln) through the transamidation of misacylated Glu-tRNA(Gln) in organisms which lack glutaminyl-tRNA synthetase. The reaction takes place in the presence of glutamine and ATP through an activated gamma-phospho-Glu-tRNA(Gln). In Myxococcus xanthus (strain DK1622), this protein is Glutamyl-tRNA(Gln) amidotransferase subunit A.